Consider the following 163-residue polypeptide: Choriogonadotropin subunit beta (163 aa).

The first 20 residues, 1–20 (MEMLQGLLLCLLLSTGGAWA), serve as a signal peptide directing secretion. Disulfide bonds link C29-C76, C43-C91, C46-C129, C54-C107, C58-C109, and C112-C119. N-linked (GlcNAc...) asparagine glycosylation occurs at N50. An N-linked (GlcNAc...) asparagine glycan is attached at N124. Over residues 135 to 151 (QDSSSNVPPSNLTSPSQ) the composition is skewed to polar residues. The disordered stretch occupies residues 135 to 163 (QDSSSNVPPSNLTSPSQLLEPAVTPLVPQ). S139 carries O-linked (GalNAc...) serine glycosylation. N-linked (GlcNAc...) asparagine glycosylation occurs at N145. Residue S150 is glycosylated (O-linked (GalNAc...) serine).

It belongs to the glycoprotein hormones subunit beta family. In terms of assembly, heterodimer of a common alpha chain and a unique beta chain which confers biological specificity to thyrotropin, lutropin, follitropin and gonadotropin.

The protein resides in the secreted. In terms of biological role, stimulates the ovaries to synthesize the steroids that are essential for the maintenance of pregnancy. The polypeptide is Choriogonadotropin subunit beta (CGB) (Saimiri boliviensis boliviensis (Bolivian squirrel monkey)).